A 187-amino-acid chain; its full sequence is Protein GrpE (187 aa).

A disordered region spans residues 1–31 (MEKKETKNDAEKNNKQDNKSTKSQKKENLNL).

This sequence belongs to the GrpE family. As to quaternary structure, homodimer.

Its subcellular location is the cytoplasm. In terms of biological role, participates actively in the response to hyperosmotic and heat shock by preventing the aggregation of stress-denatured proteins, in association with DnaK and GrpE. It is the nucleotide exchange factor for DnaK and may function as a thermosensor. Unfolded proteins bind initially to DnaJ; upon interaction with the DnaJ-bound protein, DnaK hydrolyzes its bound ATP, resulting in the formation of a stable complex. GrpE releases ADP from DnaK; ATP binding to DnaK triggers the release of the substrate protein, thus completing the reaction cycle. Several rounds of ATP-dependent interactions between DnaJ, DnaK and GrpE are required for fully efficient folding. The protein is Protein GrpE of Borrelia garinii subsp. bavariensis (strain ATCC BAA-2496 / DSM 23469 / PBi) (Borreliella bavariensis).